Consider the following 271-residue polypeptide: ATP synthase subunit delta (271 aa).

This sequence belongs to the ATPase delta chain family. F-type ATPases have 2 components, F(1) - the catalytic core - and F(0) - the membrane proton channel. F(1) has five subunits: alpha(3), beta(3), gamma(1), delta(1), epsilon(1). F(0) has three main subunits: a(1), b(2) and c(10-14). The alpha and beta chains form an alternating ring which encloses part of the gamma chain. F(1) is attached to F(0) by a central stalk formed by the gamma and epsilon chains, while a peripheral stalk is formed by the delta and b chains.

Its subcellular location is the cell membrane. Its function is as follows. F(1)F(0) ATP synthase produces ATP from ADP in the presence of a proton or sodium gradient. F-type ATPases consist of two structural domains, F(1) containing the extramembraneous catalytic core and F(0) containing the membrane proton channel, linked together by a central stalk and a peripheral stalk. During catalysis, ATP synthesis in the catalytic domain of F(1) is coupled via a rotary mechanism of the central stalk subunits to proton translocation. In terms of biological role, this protein is part of the stalk that links CF(0) to CF(1). It either transmits conformational changes from CF(0) to CF(1) or is implicated in proton conduction. The polypeptide is ATP synthase subunit delta (Renibacterium salmoninarum (strain ATCC 33209 / DSM 20767 / JCM 11484 / NBRC 15589 / NCIMB 2235)).